Consider the following 1381-residue polypeptide: Hepatocyte growth factor receptor (1381 aa).

The N-terminal stretch at 1–24 (MKAPAVLAPGILVLLFTLVQRSNG) is a signal peptide. Over 25–932 (ECKEALAKSE…VIVQPDQNFT (908 aa)) the chain is Extracellular. Positions 27-515 (KEALAKSEMN…TGKKITKIPL (489 aa)) constitute a Sema domain. An N-linked (GlcNAc...) asparagine glycan is attached at Asn45. 4 disulfides stabilise this stretch: Cys95/Cys101, Cys98/Cys160, Cys133/Cys141, and Cys172/Cys175. Asn106 is a glycosylation site (N-linked (GlcNAc...) asparagine). Asn149 carries an N-linked (GlcNAc...) asparagine glycan. Asn202 carries N-linked (GlcNAc...) asparagine glycosylation. 2 cysteine pairs are disulfide-bonded: Cys298-Cys363 and Cys385-Cys397. N-linked (GlcNAc...) asparagine glycans are attached at residues Asn399 and Asn405. 4 disulfide bridges follow: Cys520–Cys538, Cys526–Cys561, Cys529–Cys545, and Cys541–Cys551. IPT/TIG domains are found at residues 563-655 (PAIY…FSYV), 657-739 (PIIT…FSYR), and 742-836 (PIVY…LIYV). Thr582 carries an O-linked (Man) threonine glycan. N-linked (GlcNAc...) asparagine glycosylation is found at Asn607 and Asn635. O-linked (Man) threonine glycosylation is found at Thr676 and Thr761. N-linked (GlcNAc...) asparagine glycans are attached at residues Asn785, Asn879, and Asn930. A helical transmembrane segment spans residues 933 to 955 (GLIAGVVSISIALLLLLGLFLWL). Residues 956 to 1381 (KKRKQIKDLG…EDNADDEVDT (426 aa)) are Cytoplasmic-facing. At Ser966 the chain carries Phosphoserine. Position 977 is a phosphothreonine (Thr977). Residues Ser990, Ser997, and Ser1000 each carry the phosphoserine modification. Position 1003 is a phosphotyrosine (Tyr1003). The Protein kinase domain maps to 1078-1345 (VHFNEVIGRG…RISAIFSTFI (268 aa)). ATP contacts are provided by residues 1084-1092 (IGRGHFGCV) and Lys1110. The Proton acceptor role is filled by Asp1204. Residues 1212–1381 (LDEKFTVKVA…EDNADDEVDT (170 aa)) are interaction with RANBP9. The residue at position 1230 (Tyr1230) is a Phosphotyrosine. Phosphotyrosine; by autocatalysis occurs at positions 1234 and 1235. Thr1289 is modified (phosphothreonine). The segment at 1320-1359 (WHPKAEMRPSFSELVSRISAIFSTFIGEHYVHVNATYVNV) is interaction with MUC20. Residues Tyr1349 and Tyr1356 each carry the phosphotyrosine; by autocatalysis modification. Tyr1365 is modified (phosphotyrosine).

The protein belongs to the protein kinase superfamily. Tyr protein kinase family. In terms of assembly, heterodimer made of an alpha chain (50 kDa) and a beta chain (145 kDa) which are disulfide linked. Binds PLXNB1. Interacts when phosphorylated with downstream effectors including STAT3, PIK3R1, SRC, PCLG1, GRB2 and GAB1. Interacts with SPSB1, SPSB2 and SPSB4. Interacts with INPP5D/SHIP1. When phosphorylated at Tyr-1356, interacts with INPPL1/SHIP2. Interacts with RANBP9 and RANBP10, as well as SPSB1, SPSB2, SPSB3 and SPSB4. SPSB1 binding occurs in the presence and in the absence of HGF, however HGF treatment has a positive effect on this interaction. Interacts with MUC20; prevents interaction with GRB2 and suppresses hepatocyte growth factor-induced cell proliferation. Interacts with GRB10. Interacts with PTPN1 and PTPN2. Interacts with HSP90AA1 and HSP90AB1; the interaction suppresses MET kinase activity. Interacts with tensin TNS3. Interacts (when phosphorylated) with tensin TNS4 (via SH2 domain); the interaction increases MET protein stability by inhibiting MET endocytosis and subsequent lysosomal degradation. Autophosphorylated in response to ligand binding on Tyr-1234 and Tyr-1235 in the kinase domain leading to further phosphorylation of Tyr-1349 and Tyr-1356 in the C-terminal multifunctional docking site. Dephosphorylated by PTPRJ at Tyr-1349 and Tyr-1365. Dephosphorylated by PTPN1 and PTPN2. In terms of processing, ubiquitinated. Ubiquitination by CBL regulates the receptor stability and activity through proteasomal degradation. Post-translationally, O-mannosylation of IPT/TIG domains by TMEM260 is required for protein maturation. O-mannosylated residues are composed of single mannose glycans that are not elongated or modified.

Its subcellular location is the membrane. The enzyme catalyses L-tyrosyl-[protein] + ATP = O-phospho-L-tyrosyl-[protein] + ADP + H(+). With respect to regulation, in its inactive state, the C-terminal tail interacts with the catalytic domain and inhibits the kinase activity. Upon ligand binding, the C-terminal tail is displaced and becomes phosphorylated, thus increasing the kinase activity. Its function is as follows. Receptor tyrosine kinase that transduces signals from the extracellular matrix into the cytoplasm by binding to hepatocyte growth factor/HGF ligand. Regulates many physiological processes including proliferation, scattering, morphogenesis and survival. Ligand binding at the cell surface induces autophosphorylation of MET on its intracellular domain that provides docking sites for downstream signaling molecules. Following activation by ligand, interacts with the PI3-kinase subunit PIK3R1, PLCG1, SRC, GRB2, STAT3 or the adapter GAB1. Recruitment of these downstream effectors by MET leads to the activation of several signaling cascades including the RAS-ERK, PI3 kinase-AKT, or PLCgamma-PKC. The RAS-ERK activation is associated with the morphogenetic effects while PI3K/AKT coordinates prosurvival effects. During embryonic development, MET signaling plays a role in gastrulation, development and migration of muscles and neuronal precursors, angiogenesis and kidney formation. In adults, participates in wound healing as well as organ regeneration and tissue remodeling. Also promotes differentiation and proliferation of hematopoietic cells. This chain is Hepatocyte growth factor receptor (MET), found in Colobus guereza (Mantled guereza).